Here is a 321-residue protein sequence, read N- to C-terminus: ATP-dependent 6-phosphofructokinase (321 aa).

Glycine 12 lines the ATP pocket. ADP contacts are provided by residues 22–26 and 55–60; these read RGVVR and RYSVSD. ATP is bound by residues 73–74 and 103–106; these read RF and GDGS. Aspartate 104 is a binding site for Mg(2+). 127 to 129 contacts substrate; it reads TID. Aspartate 129 serves as the catalytic Proton acceptor. Arginine 156 lines the ADP pocket. Substrate is bound by residues arginine 164 and 171 to 173; that span reads MGR. Residues 187–189, arginine 213, and 215–217 each bind ADP; these read GCE and KRH. Substrate contacts are provided by residues glutamate 224, arginine 245, and 251–254; that span reads HIQR.

This sequence belongs to the phosphofructokinase type A (PFKA) family. ATP-dependent PFK group I subfamily. Prokaryotic clade 'B1' sub-subfamily. Homotetramer. The cofactor is Mg(2+).

The protein resides in the cytoplasm. The catalysed reaction is beta-D-fructose 6-phosphate + ATP = beta-D-fructose 1,6-bisphosphate + ADP + H(+). The protein operates within carbohydrate degradation; glycolysis; D-glyceraldehyde 3-phosphate and glycerone phosphate from D-glucose: step 3/4. With respect to regulation, allosterically activated by ADP and other diphosphonucleosides, and allosterically inhibited by phosphoenolpyruvate. Catalyzes the phosphorylation of D-fructose 6-phosphate to fructose 1,6-bisphosphate by ATP, the first committing step of glycolysis. This is ATP-dependent 6-phosphofructokinase from Haemophilus influenzae (strain 86-028NP).